A 271-amino-acid chain; its full sequence is Probable iron transport system membrane protein HI_0359 (271 aa).

Transmembrane regions (helical) follow at residues 17-37 (ALLT…YLVL), 55-75 (IVLA…SGIF), 93-113 (TAMG…FTKI), 131-151 (SHQE…LIVF), 168-188 (VAGL…ALTI), 194-214 (VVGV…ALTL), 221-241 (MLWV…ILSY), and 245-265 (ASTG…ALAY).

It belongs to the ABC-3 integral membrane protein family.

The protein resides in the cell inner membrane. Part of an ATP-driven transport system HI_0359/HI_0360/HI_0361/HI_0362 for iron. The chain is Probable iron transport system membrane protein HI_0359 from Haemophilus influenzae (strain ATCC 51907 / DSM 11121 / KW20 / Rd).